The following is a 681-amino-acid chain: DNA ligase (681 aa).

NAD(+) contacts are provided by residues 45-49 (DFDFD), 94-95 (SL), and Glu120. Lys122 acts as the N6-AMP-lysine intermediate in catalysis. 4 residues coordinate NAD(+): Arg143, Glu177, Lys289, and Lys313. Zn(2+) contacts are provided by Cys403, Cys406, Cys421, and Cys426. A BRCT domain is found at 593 to 681 (SDQQPFAGQS…SLKINFKNTI (89 aa)).

Belongs to the NAD-dependent DNA ligase family. LigA subfamily. It depends on Mg(2+) as a cofactor. Mn(2+) serves as cofactor.

It carries out the reaction NAD(+) + (deoxyribonucleotide)n-3'-hydroxyl + 5'-phospho-(deoxyribonucleotide)m = (deoxyribonucleotide)n+m + AMP + beta-nicotinamide D-nucleotide.. In terms of biological role, DNA ligase that catalyzes the formation of phosphodiester linkages between 5'-phosphoryl and 3'-hydroxyl groups in double-stranded DNA using NAD as a coenzyme and as the energy source for the reaction. It is essential for DNA replication and repair of damaged DNA. This is DNA ligase from Leptospira borgpetersenii serovar Hardjo-bovis (strain JB197).